A 427-amino-acid chain; its full sequence is Glutamyl-tRNA reductase (427 aa).

Residues 49 to 52, Ser-101, 106 to 108, and Gln-112 contribute to the substrate site; these read TCNR and EPQ. The active-site Nucleophile is Cys-50. 181-186 is an NADP(+) binding site; the sequence is GAGETI. The disordered stretch occupies residues 407–427; it reads FPATPGYRHPPVRPDDADPAP. The span at 418–427 shows a compositional bias: basic and acidic residues; sequence VRPDDADPAP.

This sequence belongs to the glutamyl-tRNA reductase family. Homodimer.

The enzyme catalyses (S)-4-amino-5-oxopentanoate + tRNA(Glu) + NADP(+) = L-glutamyl-tRNA(Glu) + NADPH + H(+). It participates in porphyrin-containing compound metabolism; protoporphyrin-IX biosynthesis; 5-aminolevulinate from L-glutamyl-tRNA(Glu): step 1/2. Functionally, catalyzes the NADPH-dependent reduction of glutamyl-tRNA(Glu) to glutamate 1-semialdehyde (GSA). This Stenotrophomonas maltophilia (strain R551-3) protein is Glutamyl-tRNA reductase.